A 778-amino-acid chain; its full sequence is Arf-GAP with coiled-coil, ANK repeat and PH domain-containing protein 2 (778 aa).

The BAR domain occupies 1–226; that stretch reads MKMTVDFEEC…MKDLGAQLDR (226 aa). In terms of domain architecture, PH spans 266–361; it reads GIVMEGYLFK…WIKAVQTSIA (96 aa). The segment at 371–391 is disordered; the sequence is SEKLDKKSSPSTGSLDSGNES. The segment covering 379 to 388 has biased composition (polar residues); that stretch reads SPSTGSLDSG. Phosphoserine is present on residues S384 and S387. Residues 399 to 520 enclose the Arf-GAP domain; the sequence is ESALQRVQCI…KFVDKYSISL (122 aa). The segment at 414-437 adopts a C4-type zinc-finger fold; the sequence is CCDCGLADPRWASINLGITLCIEC. S521 carries the phosphoserine modification. The interval 540 to 599 is disordered; sequence SISKFGPGDQVRASAQSSVRSNDSGIQQSSDDGRESLPSTVSANSLYEPEGERQDSSMFL. Over residues 552 to 569 the composition is skewed to polar residues; the sequence is ASAQSSVRSNDSGIQQSS. A phosphoserine mark is found at S581 and S584. 3 ANK repeats span residues 640 to 669, 673 to 702, and 706 to 735; these read NKAT…NVNQ, QGRG…NQHA, and EGKD…NEEM. A Phosphotyrosine modification is found at Y742. S775 bears the Phosphoserine mark.

In terms of assembly, interacts (via KANK domains) with RAB35 (GTP-bound form); the interaction is direct and probably recruits ACAP2 to membranes including plasma membrane. Interacts with MICALL1; the interaction is indirect through RAB35. In terms of tissue distribution, widely expressed. Highest level in lung.

It localises to the cell membrane. Its subcellular location is the endosome membrane. With respect to regulation, GAP activity stimulated by phosphatidylinositol 4,5-bisphosphate (PIP2) and phosphatidic acid. Its function is as follows. GTPase-activating protein (GAP) for ADP ribosylation factor 6 (ARF6). Doesn't show GAP activity for RAB35. The chain is Arf-GAP with coiled-coil, ANK repeat and PH domain-containing protein 2 (ACAP2) from Homo sapiens (Human).